The sequence spans 264 residues: Major prion protein 1 (264 aa).

Positions 1–24 are cleaved as a signal peptide; the sequence is MVKSHIGSWILVLFVAMWSDVALC. An interaction with GRB2, ERI3 and SYN1 region spans residues 25–241; that stretch reads KKRPKPGGGW…ESEAYYQRGA (217 aa). The disordered stretch occupies residues 28–118; that stretch reads PKPGGGWNTG…QWNKPSKPKT (91 aa). Repeat copies occupy residues 54–62, 63–70, 71–78, 79–86, 87–94, and 95–103. A 6 X 8 AA tandem repeats of P-H-G-G-G-W-G-Q region spans residues 54-103; it reads SQGGGGWGQPHGGGWGQPHGGGWGQPHGGGWGQPHGGGWGQPHGGGGWGQ. The segment covering 55-107 has biased composition (gly residues); the sequence is QGGGGWGQPHGGGWGQPHGGGWGQPHGGGWGQPHGGGWGQPHGGGGWGQGGTH. Residues H72, G73, G74, H80, G81, G82, H88, G89, G90, H96, G98, and G99 each coordinate Cu(2+). The cysteines at positions 190 and 225 are disulfide-linked. N-linked (GlcNAc...) asparagine glycosylation is found at N192 and N208. Residue A241 is the site of GPI-anchor amidated alanine attachment. A propeptide spans 242–264 (removed in mature form); that stretch reads SVILFSSPPVILLISFLIFLIVG.

The protein belongs to the prion family. Monomer and homodimer. Has a tendency to aggregate into amyloid fibrils containing a cross-beta spine, formed by a steric zipper of superposed beta-strands. Soluble oligomers may represent an intermediate stage on the path to fibril formation. Copper binding may promote oligomerization. Interacts with GRB2, APP, ERI3/PRNPIP and SYN1. Mislocalized cytosolically exposed PrP interacts with MGRN1; this interaction alters MGRN1 subcellular location and causes lysosomal enlargement. Interacts with KIAA1191.

It is found in the cell membrane. It localises to the golgi apparatus. Its function is as follows. Its primary physiological function is unclear. Has cytoprotective activity against internal or environmental stresses. May play a role in neuronal development and synaptic plasticity. May be required for neuronal myelin sheath maintenance. May play a role in iron uptake and iron homeostasis. Soluble oligomers are toxic to cultured neuroblastoma cells and induce apoptosis (in vitro). Association with GPC1 (via its heparan sulfate chains) targets PRNP to lipid rafts. Also provides Cu(2+) or Zn(2+) for the ascorbate-mediated GPC1 deaminase degradation of its heparan sulfate side chains. The chain is Major prion protein 1 from Tragelaphus strepsiceros (Greater kudu).